The primary structure comprises 364 residues: Dual-specificity RNA methyltransferase RlmN (364 aa).

Catalysis depends on Glu91, which acts as the Proton acceptor. One can recognise a Radical SAM core domain in the interval Glu97–Asp333. A disulfide bridge links Cys104 with Cys338. Cys111, Cys115, and Cys118 together coordinate [4Fe-4S] cluster. S-adenosyl-L-methionine-binding positions include Gly164–Glu165, Ser196, Ser218–His220, and Asn295. Cys338 (S-methylcysteine intermediate) is an active-site residue.

It belongs to the radical SAM superfamily. RlmN family. It depends on [4Fe-4S] cluster as a cofactor.

It localises to the cytoplasm. The catalysed reaction is adenosine(2503) in 23S rRNA + 2 reduced [2Fe-2S]-[ferredoxin] + 2 S-adenosyl-L-methionine = 2-methyladenosine(2503) in 23S rRNA + 5'-deoxyadenosine + L-methionine + 2 oxidized [2Fe-2S]-[ferredoxin] + S-adenosyl-L-homocysteine. It catalyses the reaction adenosine(37) in tRNA + 2 reduced [2Fe-2S]-[ferredoxin] + 2 S-adenosyl-L-methionine = 2-methyladenosine(37) in tRNA + 5'-deoxyadenosine + L-methionine + 2 oxidized [2Fe-2S]-[ferredoxin] + S-adenosyl-L-homocysteine. Functionally, specifically methylates position 2 of adenine 2503 in 23S rRNA and position 2 of adenine 37 in tRNAs. m2A2503 modification seems to play a crucial role in the proofreading step occurring at the peptidyl transferase center and thus would serve to optimize ribosomal fidelity. This Neisseria meningitidis serogroup A / serotype 4A (strain DSM 15465 / Z2491) protein is Dual-specificity RNA methyltransferase RlmN.